The chain runs to 669 residues: DNA ligase (669 aa).

NAD(+) is bound by residues 31–35, 80–81, and Glu112; these read DAEYD and SL. Lys114 acts as the N6-AMP-lysine intermediate in catalysis. NAD(+) contacts are provided by Arg135, Glu172, Lys289, and Lys313. Zn(2+) is bound by residues Cys407, Cys410, Cys425, and Cys431. Residues 591–669 enclose the BRCT domain; sequence SVPQPLADKV…EEQLIEILNN (79 aa).

It belongs to the NAD-dependent DNA ligase family. LigA subfamily. It depends on Mg(2+) as a cofactor. Mn(2+) is required as a cofactor.

It catalyses the reaction NAD(+) + (deoxyribonucleotide)n-3'-hydroxyl + 5'-phospho-(deoxyribonucleotide)m = (deoxyribonucleotide)n+m + AMP + beta-nicotinamide D-nucleotide.. Functionally, DNA ligase that catalyzes the formation of phosphodiester linkages between 5'-phosphoryl and 3'-hydroxyl groups in double-stranded DNA using NAD as a coenzyme and as the energy source for the reaction. It is essential for DNA replication and repair of damaged DNA. This chain is DNA ligase, found in Aliivibrio salmonicida (strain LFI1238) (Vibrio salmonicida (strain LFI1238)).